A 127-amino-acid polypeptide reads, in one-letter code: Large ribosomal subunit protein bL19 (127 aa).

It belongs to the bacterial ribosomal protein bL19 family.

Functionally, this protein is located at the 30S-50S ribosomal subunit interface and may play a role in the structure and function of the aminoacyl-tRNA binding site. The polypeptide is Large ribosomal subunit protein bL19 (Cupriavidus pinatubonensis (strain JMP 134 / LMG 1197) (Cupriavidus necator (strain JMP 134))).